Consider the following 378-residue polypeptide: Chaperone protein DnaJ (378 aa).

In terms of domain architecture, J spans 5–70 (DYYETLGVSQ…QKRAAYDQYG (66 aa)). The CR-type zinc-finger motif lies at 134-212 (GKSLEIKVPT…CRGQGRVEKT (79 aa)). Zn(2+)-binding residues include cysteine 147, cysteine 150, cysteine 164, cysteine 167, cysteine 186, cysteine 189, cysteine 200, and cysteine 203. CXXCXGXG motif repeat units follow at residues 147 to 154 (CEPCDGSG), 164 to 171 (CSTCHGHG), 186 to 193 (CPTCSGKG), and 200 to 207 (CTSCRGQG).

Belongs to the DnaJ family. As to quaternary structure, homodimer. Zn(2+) is required as a cofactor.

The protein localises to the cytoplasm. Participates actively in the response to hyperosmotic and heat shock by preventing the aggregation of stress-denatured proteins and by disaggregating proteins, also in an autonomous, DnaK-independent fashion. Unfolded proteins bind initially to DnaJ; upon interaction with the DnaJ-bound protein, DnaK hydrolyzes its bound ATP, resulting in the formation of a stable complex. GrpE releases ADP from DnaK; ATP binding to DnaK triggers the release of the substrate protein, thus completing the reaction cycle. Several rounds of ATP-dependent interactions between DnaJ, DnaK and GrpE are required for fully efficient folding. Also involved, together with DnaK and GrpE, in the DNA replication of plasmids through activation of initiation proteins. The polypeptide is Chaperone protein DnaJ (Colwellia psychrerythraea (strain 34H / ATCC BAA-681) (Vibrio psychroerythus)).